Reading from the N-terminus, the 348-residue chain is NADH-ubiquinone oxidoreductase chain 2 (348 aa).

10 helical membrane passes run 1 to 21, 25 to 45, 60 to 80, 93 to 115, 149 to 169, 177 to 197, 200 to 220, 239 to 259, 274 to 294, and 326 to 346; these read MSPY…TITF, SWLM…PLMV, FLTQ…NAWM, LSAP…HFWL, LNTT…GLGG, KVLA…IQYS, LALL…LTLM, IATM…PLTG, NLPA…FFYL, and LAML…MVAI.

The protein belongs to the complex I subunit 2 family.

It localises to the mitochondrion inner membrane. It carries out the reaction a ubiquinone + NADH + 5 H(+)(in) = a ubiquinol + NAD(+) + 4 H(+)(out). Core subunit of the mitochondrial membrane respiratory chain NADH dehydrogenase (Complex I) that is believed to belong to the minimal assembly required for catalysis. Complex I functions in the transfer of electrons from NADH to the respiratory chain. The immediate electron acceptor for the enzyme is believed to be ubiquinone. The protein is NADH-ubiquinone oxidoreductase chain 2 (MT-ND2) of Latimeria chalumnae (Coelacanth).